The primary structure comprises 393 residues: 4-hydroxyphenylpyruvate dioxygenase (393 aa).

An N-acetylthreonine modification is found at T2. VOC domains are found at residues 18–149 (HFHS…LVEK) and 180–338 (IIDH…IFTK). K132 carries the N6-succinyllysine modification. H183 contacts Fe cation. A phosphoserine mark is found at S211, S226, and S250. Residues H266 and E349 each contribute to the Fe cation site.

It belongs to the 4HPPD family. In terms of assembly, homodimer. Requires Fe cation as cofactor.

It is found in the cytoplasm. The protein localises to the endoplasmic reticulum membrane. The protein resides in the golgi apparatus membrane. The catalysed reaction is 3-(4-hydroxyphenyl)pyruvate + O2 = homogentisate + CO2. Its pathway is amino-acid degradation; L-phenylalanine degradation; acetoacetate and fumarate from L-phenylalanine: step 3/6. Functionally, catalyzes the conversion of 4-hydroxyphenylpyruvic acid to homogentisic acid, one of the steps in tyrosine catabolism. The chain is 4-hydroxyphenylpyruvate dioxygenase (HPD) from Bos taurus (Bovine).